Consider the following 79-residue polypeptide: Defensin-like protein 117 (79 aa).

An N-terminal signal peptide occupies residues 1–24 (MTTTKTMLVAFVLTLFFVISSVHC). 4 cysteine pairs are disulfide-bonded: Cys-40-Cys-75, Cys-46-Cys-68, Cys-53-Cys-73, and Cys-57-Cys-74.

Belongs to the DEFL family.

The protein localises to the secreted. In Arabidopsis thaliana (Mouse-ear cress), this protein is Defensin-like protein 117.